The primary structure comprises 53 residues: Light-harvesting protein B-800/820 alpha chain (53 aa).

The Cytoplasmic portion of the chain corresponds to 1–14 (MNQGKIWTVVNPAV). Residues 15–35 (GLPLLLGSVAITALLVHLAVL) form a helical membrane-spanning segment. His31 lines the a bacteriochlorophyll pocket. The Periplasmic portion of the chain corresponds to 36–53 (THTTWFPAFTQGGLKKAA).

Belongs to the antenna complex alpha subunit family. In terms of assembly, the core complex is formed by different alpha and beta chains, binding bacteriochlorophyll molecules, and arranged most probably in tetrameric structures disposed around the reaction center. The non-pigmented gamma chains may constitute additional components.

The protein resides in the cell inner membrane. Antenna complexes are light-harvesting systems, which transfer the excitation energy to the reaction centers. The chain is Light-harvesting protein B-800/820 alpha chain from Rhodoblastus acidophilus (Rhodopseudomonas acidophila).